The sequence spans 460 residues: Ammonium transporter Rh type C (460 aa).

Topologically, residues 1–9 (MIWNTNLRW) are cytoplasmic. The helical transmembrane segment at 10–30 (RLPVACLLLEVALIALFGVFV) threads the bilayer. Residues 31–61 (RYDMDADPHWVQEKVIKNLSTDLENEFYYRY) lie on the Extracellular side of the membrane. Asparagine 48 carries an N-linked (GlcNAc...) asparagine glycan. A helical membrane pass occupies residues 62 to 82 (PSFQDVHVMIFVGFGFLMTFL). Over 83–89 (QRYGYSS) the chain is Cytoplasmic. Residues 90–110 (VGFNFLLAAFGIQWALLMQGW) traverse the membrane as a helical segment. The Extracellular segment spans residues 111-125 (LQSFDGRYILVDLEN). Residues 126 to 145 (LINADFCVGSVCVAFGAVLG) traverse the membrane as a helical segment. Over 146–151 (KVSPVQ) the chain is Cytoplasmic. The helical transmembrane segment at 152 to 174 (LLIMTLFQVTLFSINEYILLNLL) threads the bilayer. Residues 175 to 179 (EVKDS) are Extracellular-facing. A helical membrane pass occupies residues 180 to 200 (GGSMTIHAFGAYFGLTVAWIL). The Cytoplasmic portion of the chain corresponds to 201–219 (YRPNLHLSKERQSSTYHSD). A helical membrane pass occupies residues 220-240 (LFAMIGTLFLWMYWPSFNSAI). The Extracellular portion of the chain corresponds to 241-251 (SNHGDAQHRAA). Residues 252–272 (INTYCSLAACVLTSVALSSAL) traverse the membrane as a helical segment. Residues 273 to 285 (HRKGKLDMVHIQN) lie on the Cytoplasmic side of the membrane. A helical membrane pass occupies residues 286-303 (ATLAGGVGLGTVAELMVL). Residues 304–306 (PFG) are Extracellular-facing. Residues 307–329 (SLIIGFVCGIVSTLGFVYLTPFL) form a helical membrane-spanning segment. Over 330 to 346 (ESRLHIQDTCGVHNLHG) the chain is Cytoplasmic. The chain crosses the membrane as a helical span at residues 347-367 (IPGIIGGIAGAVTASIANIDL). Residues 368–396 (YGEEGLAYAFGIERSKLNWSPNMQGRFQA) are Extracellular-facing. The chain crosses the membrane as a helical span at residues 397–417 (AGLFVSLAMALVGGVIVGVIL). At 418 to 460 (RLPFWGQAPDENCFEDAVYWEIPKEPKSTALRSEDSSIKPPEP) the chain is on the cytoplasmic side.

The protein belongs to the ammonium transporter (TC 2.A.49) family. Rh subfamily. Homotrimer. In terms of processing, N-glycosylated.

Its subcellular location is the apical cell membrane. The enzyme catalyses NH4(+)(in) = NH4(+)(out). The catalysed reaction is methylamine(out) = methylamine(in). It carries out the reaction CO2(out) = CO2(in). In terms of biological role, ammonium transporter involved in the maintenance of acid-base homeostasis. Transports ammonium and its related derivative methylammonium across the plasma membrane of epithelial cells likely contributing to renal transepithelial ammonia transport and ammonia metabolism. Postulated to primarily mediate an electroneutral bidirectional transport of NH3 ammonia species according to a mechanism that implies interaction of an NH4(+) ion with acidic residues of the pore entry followed by dissociation of NH4(+) into NH3 and H(+). As a result NH3 transits through the central pore and is protonated on the extracellular side reforming NH4(+). May act as a CO2 channel providing for renal acid secretion. The chain is Ammonium transporter Rh type C (RHCG) from Bos taurus (Bovine).